A 365-amino-acid polypeptide reads, in one-letter code: Protein SGT1 homolog (365 aa).

Alanine 2 bears the N-acetylalanine mark. 3 TPR repeats span residues 11–44 (SQRFFQSFSDALIDEDPQAALEELTKALEQKPDD), 45–78 (AQYYCQRAYCHILLGNYCVAVADAKKSLELNPNN), and 79–112 (STAMLRKGICEYHEKNYAAALETFTEGQKLDIET). Positions 169–258 (QSKIKYDWYQ…PEAVRWEKLE (90 aa)) constitute a CS domain. Residue threonine 265 is modified to Phosphothreonine. One can recognise an SGS domain in the interval 276 to 365 (LYPSSSPYTR…PPDDMEWKKY (90 aa)). Serine 281 carries the post-translational modification Phosphoserine. Position 284 is a phosphothreonine (threonine 284). Lysine 295 participates in a covalent cross-link: Glycyl lysine isopeptide (Lys-Gly) (interchain with G-Cter in SUMO1); alternate. Lysine 295 is covalently cross-linked (Glycyl lysine isopeptide (Lys-Gly) (interchain with G-Cter in SUMO2); alternate). At serine 331 the chain carries Phosphoserine.

This sequence belongs to the SGT1 family. As to quaternary structure, probably associates with SCF (SKP1-CUL1-F-box protein) complex through interaction with SKP1. Interacts with S100A6. Interacts with HSP90. Post-translationally, phosphorylated at Ser-281 and Ser-331, dephosphorylation promotes nuclear translocation, most likely due to disruption of the SUGT1-HSP90 complex.

The protein resides in the cytoplasm. It is found in the nucleus. Functionally, may play a role in ubiquitination and subsequent proteasomal degradation of target proteins. The sequence is that of Protein SGT1 homolog from Homo sapiens (Human).